The following is a 692-amino-acid chain: MAAARAVARDPGAYARQPPSLRAARLPRLLFLLAVVAAVGPREGGGARLYREGSDAVWLLDSGSVRSATGNSSAAWLVQFHSSWCGHCIGYAPTWRALAADVRDWAAAIRVAALDCAEEKNQDVCRTYDIHFYPTFRYFKAFTKEFTTGENFKGPDRELRTVRQTMIDFLQNHTEGTWPPACPPLDPIQSSDILSFMDSHSGQYHAIVFESNGSYVGREVILDLIPYENIMVSRALDTDKAFLGTLGITSVPSCYLIYPNGSHGLVNVAKPLRSFFSSHLKSLPDVRKKSLFLPEKSNKEEKSEVVVWKEFDRAKLYTADLESGLHYLLRVELAAHRSLAGAQLKTFRDFVTVVAKLFPGRPAVKKLLETLQEWLANLPLDKIPYNAILDLVNNKMQISGIFLTSHVKWVGCQGSRLELRGYPCSLWKLFHTLTVQASTHPEALAGTGFEGHPQAVLQAIRRYIRTFFGCKECGEHFEEMAKESMDSVKTPDQAVLWLWRKHNMVNSRLAGHLSEDPKFPKVPWPTPDLCPACHEEIKGLDSWNEGQVLLFLKQHYSRDNLVDAYSVDQGSPGEWEAQGREQEEGKGLNPSGKSWRHHDTGSLRPPHILGPRTDLSKSLHHRLDLRLQSPQGPQALKEAKAVVPFLGVGFSSLDMSLCVVLYVASSLFLMIMYFFFRVRSKRWKVRLYHPAV.

The N-terminal stretch at 1–38 (MAAARAVARDPGAYARQPPSLRAARLPRLLFLLAVVAA) is a signal peptide. The Thioredoxin domain occupies 54–172 (SDAVWLLDSG…RQTMIDFLQN (119 aa)). N-linked (GlcNAc...) asparagine glycosylation is present at N71. Catalysis depends on nucleophile residues C85 and C88. 2 disulfide bridges follow: C85–C88 and C116–C125. Residues N172, N212, and N260 are each glycosylated (N-linked (GlcNAc...) asparagine). C412 and C424 form a disulfide bridge. Residues 415-524 (SRLELRGYPC…EDPKFPKVPW (110 aa)) enclose the ERV/ALR sulfhydryl oxidase domain. Residues R420, W427, H431, E472, H476, 499–506 (WRKHNMVN), K521, and W524 contribute to the FAD site. A disulfide bridge links C470 with C473. A disulfide bridge links C530 with C533. Residues 568 to 607 (DQGSPGEWEAQGREQEEGKGLNPSGKSWRHHDTGSLRPPH) form a disordered region. Residues 577–586 (AQGREQEEGK) are compositionally biased toward basic and acidic residues. The chain crosses the membrane as a helical span at residues 656–676 (SLCVVLYVASSLFLMIMYFFF).

The protein belongs to the quiescin-sulfhydryl oxidase (QSOX) family. FAD is required as a cofactor.

It is found in the membrane. It carries out the reaction 2 R'C(R)SH + O2 = R'C(R)S-S(R)CR' + H2O2. In terms of biological role, catalyzes the oxidation of sulfhydryl groups in peptide and protein thiols to disulfides with the reduction of oxygen to hydrogen peroxide. May contribute to disulfide bond formation in a variety of secreted proteins. The protein is Sulfhydryl oxidase 2 (Qsox2) of Mus musculus (Mouse).